A 315-amino-acid chain; its full sequence is DNA-directed RNA polymerase subunit alpha (315 aa).

Residues 1–228 (MLEIEKPKIE…EHFKLFMTLT (228 aa)) are alpha N-terminal domain (alpha-NTD). An alpha C-terminal domain (alpha-CTD) region spans residues 245–315 (KEKVLEMTIE…LGLGLRKSED (71 aa)).

This sequence belongs to the RNA polymerase alpha chain family. Homodimer. The RNAP catalytic core consists of 2 alpha, 1 beta, 1 beta' and 1 omega subunit. When a sigma factor is associated with the core the holoenzyme is formed, which can initiate transcription.

The catalysed reaction is RNA(n) + a ribonucleoside 5'-triphosphate = RNA(n+1) + diphosphate. Its function is as follows. DNA-dependent RNA polymerase catalyzes the transcription of DNA into RNA using the four ribonucleoside triphosphates as substrates. This chain is DNA-directed RNA polymerase subunit alpha, found in Clostridium botulinum (strain Langeland / NCTC 10281 / Type F).